A 337-amino-acid chain; its full sequence is Mycothiol acetyltransferase (337 aa).

2 consecutive N-acetyltransferase domains span residues 11 to 151 (LDER…FELP) and 154 to 337 (VRLR…MYRK). Glutamate 37 provides a ligand contact to 1D-myo-inositol 2-(L-cysteinylamino)-2-deoxy-alpha-D-glucopyranoside. 81–83 (LVI) provides a ligand contact to acetyl-CoA. Glutamate 182 is a 1D-myo-inositol 2-(L-cysteinylamino)-2-deoxy-alpha-D-glucopyranoside binding site. A disordered region spans residues 210–246 (RPTGSGDGDVADGGSTDGGPADSGSADGGAGEGGTGD). Residues 221–234 (DGGSTDGGPADSGS) are compositionally biased toward low complexity. The span at 235-246 (ADGGAGEGGTGD) shows a compositional bias: gly residues. Lysine 257 and glutamate 271 together coordinate 1D-myo-inositol 2-(L-cysteinylamino)-2-deoxy-alpha-D-glucopyranoside. Acetyl-CoA-binding positions include 275 to 277 (VGV) and 282 to 288 (QGGGLGR). Tyrosine 309 provides a ligand contact to 1D-myo-inositol 2-(L-cysteinylamino)-2-deoxy-alpha-D-glucopyranoside. Position 314-319 (314-319 (NTAAIR)) interacts with acetyl-CoA.

Belongs to the acetyltransferase family. MshD subfamily. Monomer.

It catalyses the reaction 1D-myo-inositol 2-(L-cysteinylamino)-2-deoxy-alpha-D-glucopyranoside + acetyl-CoA = mycothiol + CoA + H(+). Functionally, catalyzes the transfer of acetyl from acetyl-CoA to desacetylmycothiol (Cys-GlcN-Ins) to form mycothiol. The polypeptide is Mycothiol acetyltransferase (Streptosporangium roseum (strain ATCC 12428 / DSM 43021 / JCM 3005 / KCTC 9067 / NCIMB 10171 / NRRL 2505 / NI 9100)).